The following is a 136-amino-acid chain: Large-conductance mechanosensitive channel (136 aa).

Transmembrane regions (helical) follow at residues 10-30 (FAMR…AAFG) and 76-96 (GVFI…FMAI).

Belongs to the MscL family. Homopentamer.

The protein localises to the cell inner membrane. Channel that opens in response to stretch forces in the membrane lipid bilayer. May participate in the regulation of osmotic pressure changes within the cell. This Shigella boydii serotype 18 (strain CDC 3083-94 / BS512) protein is Large-conductance mechanosensitive channel.